Here is a 683-residue protein sequence, read N- to C-terminus: MHKASTSSANRANFQGNHKTQKSPNNGKAKAKKSPNTDINVADVEMLLNPRSNLTKEQKERRKMMEGFVTKTFERAENESDGSDIDTSASTSNKGKSKAARPTDRKRRLQAEDSPPADANNNNTKNGKDGKVSKESASTQGASATKRKPPRSQGLEHTSPIQVDGEALACPLVRKSLPAAGASGASGPAKSCPLPEKRKSLPAGAAKSKSQVIKQEALEEASNEAQLLALPIETHKTDSIEEGRRVLQWLLNPIKVNHFFDDFWEHTAFVVQRKNPHYYSKLISFKMIDEMLVRHRLDFTINVDVTTYKNGKRETLNPEGRALPPVVWGLYSEGCSIRILNPSTYLVGLRQVCSIMQEFFHCLVGANVYLTPPNSQGFAPHYDDIEAFVIQVEGRKRWRLYEPPSGSDQLCRNSSSNFDQEQLGEPILDEVLEAGDLLYFPRGTVHQAITEEEQHSLHITLSVYQQQAYVNLLEKLMPIVLKKAIKQSVALRRGLPLHTFHVLGEAQRANRSDSRNQLVENVQKLVTKHLMPSAQDIDEAVDQLAKKFQHEALPPIILPEEQVRTVFGSRSTADEQGNAICDYEFDTKTSVRLLRANILRLVTEEDGSVRIYHHVDNGFEYCKYEPIFMEILPEEAAAVELLISAYPYYLTVGQMPLDSAARKVEVVTALWERGLLMTEKPFK.

Positions 1-26 are enriched in polar residues; sequence MHKASTSSANRANFQGNHKTQKSPNN. 2 disordered regions span residues 1–162 and 179–208; these read MHKA…SPIQ and AAGA…AAKS. Over residues 54–65 the composition is skewed to basic and acidic residues; that stretch reads LTKEQKERRKMM. The segment covering 85–94 has biased composition (polar residues); the sequence is IDTSASTSNK. Residues 95 to 108 are compositionally biased toward basic residues; sequence GKSKAARPTDRKRR. Positions 116-125 are enriched in low complexity; that stretch reads PADANNNNTK. Phosphoserine is present on S152. Residue T158 is modified to Phosphothreonine. S159 is modified (phosphoserine). The span at 179 to 189 shows a compositional bias: low complexity; it reads AAGASGASGPA. In terms of domain architecture, JmjC spans 341–480; it reads NPSTYLVGLR…NLLEKLMPIV (140 aa). Fe cation is bound by residues H381, D383, and H446.

It belongs to the ROX family. NO66 subfamily. It depends on Fe(2+) as a cofactor.

The protein resides in the nucleus. It catalyses the reaction N(6),N(6)-dimethyl-L-lysyl(36)-[histone H3] + 2 2-oxoglutarate + 2 O2 = L-lysyl(36)-[histone H3] + 2 formaldehyde + 2 succinate + 2 CO2. In terms of biological role, oxygenase that can act as both a histone lysine demethylase and a ribosomal histidine hydroxylase. Specifically demethylates 'Lys-4' (H3K4me) and 'Lys-36' (H3K36me) of histone H3, thereby playing a central role in histone code. In Drosophila yakuba (Fruit fly), this protein is Bifunctional lysine-specific demethylase and histidyl-hydroxylase NO66.